A 362-amino-acid polypeptide reads, in one-letter code: Probable dual-specificity RNA methyltransferase RlmN (362 aa).

Residue Glu-91 is the Proton acceptor of the active site. Residues 97–329 (QHYGLSVCVT…KKNGVNCVVR (233 aa)) enclose the Radical SAM core domain. An intrachain disulfide couples Cys-104 to Cys-340. Cys-111, Cys-115, and Cys-118 together coordinate [4Fe-4S] cluster. S-adenosyl-L-methionine is bound by residues 163–164 (GE), Ser-195, 218–220 (SLH), and Asn-296. Catalysis depends on Cys-340, which acts as the S-methylcysteine intermediate.

This sequence belongs to the radical SAM superfamily. RlmN family. It depends on [4Fe-4S] cluster as a cofactor.

The protein localises to the cytoplasm. It carries out the reaction adenosine(2503) in 23S rRNA + 2 reduced [2Fe-2S]-[ferredoxin] + 2 S-adenosyl-L-methionine = 2-methyladenosine(2503) in 23S rRNA + 5'-deoxyadenosine + L-methionine + 2 oxidized [2Fe-2S]-[ferredoxin] + S-adenosyl-L-homocysteine. The enzyme catalyses adenosine(37) in tRNA + 2 reduced [2Fe-2S]-[ferredoxin] + 2 S-adenosyl-L-methionine = 2-methyladenosine(37) in tRNA + 5'-deoxyadenosine + L-methionine + 2 oxidized [2Fe-2S]-[ferredoxin] + S-adenosyl-L-homocysteine. Specifically methylates position 2 of adenine 2503 in 23S rRNA and position 2 of adenine 37 in tRNAs. This chain is Probable dual-specificity RNA methyltransferase RlmN, found in Streptococcus sanguinis (strain SK36).